Consider the following 227-residue polypeptide: Cytidylate kinase (227 aa).

12 to 20 (GPSGAGKGT) contacts ATP.

Belongs to the cytidylate kinase family. Type 1 subfamily.

Its subcellular location is the cytoplasm. It catalyses the reaction CMP + ATP = CDP + ADP. It carries out the reaction dCMP + ATP = dCDP + ADP. The sequence is that of Cytidylate kinase from Citrobacter koseri (strain ATCC BAA-895 / CDC 4225-83 / SGSC4696).